The primary structure comprises 91 residues: Small ribosomal subunit protein bS18 (91 aa).

A disordered region spans residues 1-21 (MSDERTPQRSSGPRKKRPFQR). The segment covering 12–21 (GPRKKRPFQR) has biased composition (basic residues).

It belongs to the bacterial ribosomal protein bS18 family. As to quaternary structure, part of the 30S ribosomal subunit. Forms a tight heterodimer with protein bS6.

In terms of biological role, binds as a heterodimer with protein bS6 to the central domain of the 16S rRNA, where it helps stabilize the platform of the 30S subunit. This is Small ribosomal subunit protein bS18 from Geotalea uraniireducens (strain Rf4) (Geobacter uraniireducens).